We begin with the raw amino-acid sequence, 761 residues long: Disintegrin and metalloproteinase domain-containing protein 24 (761 aa).

Positions 1–34 (MVAMSEALVHARITLLQAWLRMLLFSSVWPPTWC) are cleaved as a signal peptide. The propeptide occupies 35–200 (AEYKGPPETV…GKSTRMQSIY (166 aa)). Residues 35–697 (AEYKGPPETV…SKKDAPEKPN (663 aa)) lie on the Extracellular side of the membrane. Asn-140 is a glycosylation site (N-linked (GlcNAc...) asparagine). Residues 172 to 179 (MRCGLTDE) carry the Cysteine switch motif. A Zn(2+)-binding site is contributed by Cys-174. The 193-residue stretch at 208 to 400 (LYIKLALVID…KSCIHREPRP (193 aa)) folds into the Peptidase M12B domain. N-linked (GlcNAc...) asparagine glycans are attached at residues Asn-227 and Asn-301. 7 disulfides stabilise this stretch: Cys-323/Cys-393, Cys-357/Cys-379, Cys-359/Cys-364, Cys-465/Cys-485, Cys-635/Cys-646, Cys-640/Cys-652, and Cys-654/Cys-663. His-342 contacts Zn(2+). The active site involves Glu-343. His-346 and His-352 together coordinate Zn(2+). N-linked (GlcNAc...) asparagine glycosylation is found at Asn-378, Asn-390, and Asn-479. Residues 406 to 493 (LKVCGNGIVE…ECPEDLFVQD (88 aa)) form the Disintegrin domain. Residues 631–664 (WVNDCTPETCNMKGVCNNKQHCHCDVGWSPPNCQ) enclose the EGF-like domain. The helical transmembrane segment at 698–718 (VIIWLLPIICVAVVLSVLFCL) threads the bilayer. At 719 to 761 (SGATKKSREAAASQPAEERVKPPYEGAEPSYETVKPPDEWANP) the chain is on the cytoplasmic side. Residues 725-761 (SREAAASQPAEERVKPPYEGAEPSYETVKPPDEWANP) form a disordered region.

As to quaternary structure, monomer. The cofactor is Zn(2+). In terms of processing, the prodomain is removed during sperm passage through the caput epididymis after the protein has reached the cell surface. Not processed in the secretory pathway. Expressed exclusively in testis and more specifically on the surface of mature sperm (at protein level).

The protein localises to the membrane. In terms of biological role, plasma membrane protease present on mature sperm that may be involved in sperm function during epididymal maturation and/or fertilization. In Mus musculus (Mouse), this protein is Disintegrin and metalloproteinase domain-containing protein 24.